Here is a 992-residue protein sequence, read N- to C-terminus: Vacuolar membrane protease (992 aa).

At 1-24 the chain is on the cytoplasmic side; that stretch reads MSPAMANPRVRKFNPIAFTPLPVT. The chain crosses the membrane as a helical span at residues 25 to 45; that stretch reads FITTIVYLAVLILVLVTYLVV. The Vacuolar portion of the chain corresponds to 46-390; sequence PPAPTLEMSP…SAFAVFRLHT (345 aa). 3 N-linked (GlcNAc...) asparagine glycosylation sites follow: Asn-59, Asn-115, and Asn-118. Residues His-174 and Asp-186 each coordinate Zn(2+). Glu-220 (proton acceptor) is an active-site residue. Glu-221 serves as a coordination point for Zn(2+). Asn-237 is a glycosylation site (N-linked (GlcNAc...) asparagine). Zn(2+)-binding residues include Glu-246 and His-319. A helical transmembrane segment spans residues 391–411; the sequence is LFALSVTLLVIGPLVLFITSI. Residues 412–446 are Cytoplasmic-facing; sequence ALSKTDRMYLFSMSKSLGGASETVSLRGLRGLFRT. The helical transmembrane segment at 447–467 threads the bilayer; that stretch reads PIILTVTTVISIGLAYLLEKI. Residues 468-474 are Vacuolar-facing; the sequence is NPYIVHS. Residues 475–495 traverse the membrane as a helical segment; the sequence is SQFAVWSMMLSVWIFVAWFLA. The Cytoplasmic portion of the chain corresponds to 496 to 508; that stretch reads RVADFFRPSALHR. Residues 509-529 form a helical membrane-spanning segment; sequence AYSYTWIFIVTWIMLVISTVY. Over 530-533 the chain is Vacuolar; the sequence is ANQK. A helical membrane pass occupies residues 534-554; that stretch reads GIAAGYFTFFYFAAVFLATWV. The Cytoplasmic portion of the chain corresponds to 555-671; it reads SYLELFSLPR…WSWTLPRWTW (117 aa). The tract at residues 579-620 is disordered; that stretch reads RSSSLSSRLLTPSADELPSDIGPNGAENVGDPDETDPTESTS. The chain crosses the membrane as a helical span at residues 672-692; the sequence is ILQLLLLAPIVIILVGQVGLL. Residues 693-708 are Vacuolar-facing; that stretch reads LTTAMSQIGSDGVSTF. Residues 709–729 form a helical membrane-spanning segment; that stretch reads IVYLACALFSTLLFAPLLPFI. The Cytoplasmic portion of the chain corresponds to 730–736; the sequence is HRFTYHV. Residues 737 to 757 form a helical membrane-spanning segment; that stretch reads PIFLLLIFIGTLIYNLVAFPF. The Vacuolar segment spans residues 758-992; it reads SPANRLKIFF…VEASHDFIIQ (235 aa). N-linked (GlcNAc...) asparagine glycans are attached at residues Asn-805, Asn-846, and Asn-954.

Belongs to the peptidase M28 family. Zn(2+) serves as cofactor.

The protein resides in the vacuole membrane. Its function is as follows. May be involved in vacuolar sorting and osmoregulation. The protein is Vacuolar membrane protease of Paracoccidioides brasiliensis (strain Pb18).